The following is a 715-amino-acid chain: Fatty acid oxidation complex subunit alpha (715 aa).

The enoyl-CoA hydratase stretch occupies residues 1-190; sequence MTTTSAFMLN…KAGLVDDVVP (190 aa). Positions 306–715 are 3-hydroxyacyl-CoA dehydrogenase; sequence GPLNSVGILG…WTNGETDQGN (410 aa).

It in the N-terminal section; belongs to the enoyl-CoA hydratase/isomerase family. In the central section; belongs to the 3-hydroxyacyl-CoA dehydrogenase family. Heterotetramer of two alpha chains (FadJ) and two beta chains (FadI).

Its subcellular location is the cytoplasm. It catalyses the reaction a (3S)-3-hydroxyacyl-CoA = a (2E)-enoyl-CoA + H2O. The enzyme catalyses a 4-saturated-(3S)-3-hydroxyacyl-CoA = a (3E)-enoyl-CoA + H2O. It carries out the reaction a (3S)-3-hydroxyacyl-CoA + NAD(+) = a 3-oxoacyl-CoA + NADH + H(+). The catalysed reaction is (3S)-3-hydroxybutanoyl-CoA = (3R)-3-hydroxybutanoyl-CoA. The protein operates within lipid metabolism; fatty acid beta-oxidation. Its function is as follows. Catalyzes the formation of a hydroxyacyl-CoA by addition of water on enoyl-CoA. Also exhibits 3-hydroxyacyl-CoA epimerase and 3-hydroxyacyl-CoA dehydrogenase activities. This Salmonella paratyphi B (strain ATCC BAA-1250 / SPB7) protein is Fatty acid oxidation complex subunit alpha.